Consider the following 347-residue polypeptide: Phosphate acyltransferase (347 aa).

Belongs to the PlsX family. Homodimer. Probably interacts with PlsY.

The protein resides in the cytoplasm. It carries out the reaction a fatty acyl-[ACP] + phosphate = an acyl phosphate + holo-[ACP]. It participates in lipid metabolism; phospholipid metabolism. Its function is as follows. Catalyzes the reversible formation of acyl-phosphate (acyl-PO(4)) from acyl-[acyl-carrier-protein] (acyl-ACP). This enzyme utilizes acyl-ACP as fatty acyl donor, but not acyl-CoA. This is Phosphate acyltransferase from Sinorhizobium medicae (strain WSM419) (Ensifer medicae).